Consider the following 269-residue polypeptide: Mitochondrial distribution and morphology protein 12 (269 aa).

Residues Met1–Val269 enclose the SMP-LTD domain. Residues Glu72–Glu119 are disordered. The span at Pro88–Thr114 shows a compositional bias: polar residues.

Belongs to the MDM12 family. Component of the ER-mitochondria encounter structure (ERMES) or MDM complex, composed of MMM1, MDM10, MDM12 and MDM34. An MMM1 homodimer associates with one molecule of MDM12 on each side in a pairwise head-to-tail manner, and the SMP-LTD domains of MMM1 and MDM12 generate a continuous hydrophobic tunnel for phospholipid trafficking.

The protein localises to the mitochondrion outer membrane. It localises to the endoplasmic reticulum membrane. In terms of biological role, component of the ERMES/MDM complex, which serves as a molecular tether to connect the endoplasmic reticulum (ER) and mitochondria. Components of this complex are involved in the control of mitochondrial shape and protein biogenesis, and function in nonvesicular lipid trafficking between the ER and mitochondria. MDM12 is required for the interaction of the ER-resident membrane protein MMM1 and the outer mitochondrial membrane-resident beta-barrel protein MDM10. The MDM12-MMM1 subcomplex functions in the major beta-barrel assembly pathway that is responsible for biogenesis of all mitochondrial outer membrane beta-barrel proteins, and acts in a late step after the SAM complex. The MDM10-MDM12-MMM1 subcomplex further acts in the TOM40-specific pathway after the action of the MDM12-MMM1 complex. Essential for establishing and maintaining the structure of mitochondria and maintenance of mtDNA nucleoids. This is Mitochondrial distribution and morphology protein 12 from Komagataella phaffii (strain GS115 / ATCC 20864) (Yeast).